Reading from the N-terminus, the 495-residue chain is Cytochrome P450 2B15 (495 aa).

Ser129 is modified (phosphoserine; by PKA). Cys437 lines the heme pocket.

Belongs to the cytochrome P450 family. It depends on heme as a cofactor.

The protein resides in the endoplasmic reticulum membrane. It localises to the microsome membrane. It catalyses the reaction an organic molecule + reduced [NADPH--hemoprotein reductase] + O2 = an alcohol + oxidized [NADPH--hemoprotein reductase] + H2O + H(+). Functionally, cytochromes P450 are a group of heme-thiolate monooxygenases. In liver microsomes, this enzyme is involved in an NADPH-dependent electron transport pathway. It oxidizes a variety of structurally unrelated compounds, including steroids, fatty acids, and xenobiotics. In Rattus norvegicus (Rat), this protein is Cytochrome P450 2B15 (Cyp2b15).